We begin with the raw amino-acid sequence, 200 residues long: Pyridoxal 5'-phosphate synthase subunit PdxT (200 aa).

Position 52-54 (52-54) interacts with L-glutamine; the sequence is GES. The active-site Nucleophile is the Cys84. L-glutamine-binding positions include Arg116 and 145–146; that span reads IR. Active-site charge relay system residues include His181 and Glu183.

The protein belongs to the glutaminase PdxT/SNO family. In the presence of PdxS, forms a dodecamer of heterodimers. Only shows activity in the heterodimer.

It catalyses the reaction aldehydo-D-ribose 5-phosphate + D-glyceraldehyde 3-phosphate + L-glutamine = pyridoxal 5'-phosphate + L-glutamate + phosphate + 3 H2O + H(+). The catalysed reaction is L-glutamine + H2O = L-glutamate + NH4(+). It participates in cofactor biosynthesis; pyridoxal 5'-phosphate biosynthesis. In terms of biological role, catalyzes the hydrolysis of glutamine to glutamate and ammonia as part of the biosynthesis of pyridoxal 5'-phosphate. The resulting ammonia molecule is channeled to the active site of PdxS. This is Pyridoxal 5'-phosphate synthase subunit PdxT from Saccharolobus solfataricus (strain ATCC 35092 / DSM 1617 / JCM 11322 / P2) (Sulfolobus solfataricus).